A 430-amino-acid polypeptide reads, in one-letter code: Phosphoglucosamine mutase (430 aa).

The active-site Phosphoserine intermediate is the Ser93. Ser93, Asp227, Asp229, and Asp231 together coordinate Mg(2+). Ser93 is subject to Phosphoserine.

Belongs to the phosphohexose mutase family. It depends on Mg(2+) as a cofactor. In terms of processing, activated by phosphorylation.

The enzyme catalyses alpha-D-glucosamine 1-phosphate = D-glucosamine 6-phosphate. Its function is as follows. Catalyzes the conversion of glucosamine-6-phosphate to glucosamine-1-phosphate. In Thermosipho africanus (strain TCF52B), this protein is Phosphoglucosamine mutase.